We begin with the raw amino-acid sequence, 581 residues long: CUE domain-containing protein 3 (581 aa).

In terms of domain architecture, CUE spans 271 to 314 (INPGDVKSLIELFPQLSVEEAVEHLSASLGNIDAACESVITSSL). Tyr386 carries the post-translational modification Phosphotyrosine. Disordered regions lie at residues 422–448 (DDTY…ASSK) and 522–581 (GSGN…SNEK). Polar residues predominate over residues 522 to 542 (GSGNTNIGSLRQTKFKQSNYT). Residues 552–581 (QHRPSRPSKNPSLKKKKYVRTKPKKASNEK) are compositionally biased toward basic residues.

As to quaternary structure, component of the RQT (ribosome quality control trigger) complex.

It localises to the cytoplasm. The protein localises to the nucleus. Involved in activation of the ribosome quality control (RQC) pathway, a pathway that degrades nascent peptide chains during problematic translation. Specifically recognizes and binds RPS20/uS10 ubiquitinated by HEL2, promoting recruitment of the RQT (ribosome quality control trigger) complex on stalled ribosomes, followed by disassembly of stalled ribosomes. This Schizosaccharomyces pombe (strain 972 / ATCC 24843) (Fission yeast) protein is CUE domain-containing protein 3.